The primary structure comprises 93 residues: Small ribosomal subunit protein uS19 (93 aa).

Belongs to the universal ribosomal protein uS19 family.

Its function is as follows. Protein S19 forms a complex with S13 that binds strongly to the 16S ribosomal RNA. This Latilactobacillus sakei subsp. sakei (strain 23K) (Lactobacillus sakei subsp. sakei) protein is Small ribosomal subunit protein uS19.